The chain runs to 461 residues: Argininosuccinate lyase (461 aa).

It belongs to the lyase 1 family. Argininosuccinate lyase subfamily.

Its subcellular location is the cytoplasm. The enzyme catalyses 2-(N(omega)-L-arginino)succinate = fumarate + L-arginine. The protein operates within amino-acid biosynthesis; L-arginine biosynthesis; L-arginine from L-ornithine and carbamoyl phosphate: step 3/3. In Trichormus variabilis (strain ATCC 29413 / PCC 7937) (Anabaena variabilis), this protein is Argininosuccinate lyase.